A 103-amino-acid polypeptide reads, in one-letter code: Co-chaperonin GroES (103 aa).

This sequence belongs to the GroES chaperonin family. In terms of assembly, heptamer of 7 subunits arranged in a ring. Interacts with the chaperonin GroEL.

Its subcellular location is the cytoplasm. Functionally, together with the chaperonin GroEL, plays an essential role in assisting protein folding. The GroEL-GroES system forms a nano-cage that allows encapsulation of the non-native substrate proteins and provides a physical environment optimized to promote and accelerate protein folding. GroES binds to the apical surface of the GroEL ring, thereby capping the opening of the GroEL channel. In Prochlorococcus marinus (strain MIT 9313), this protein is Co-chaperonin GroES.